Here is a 493-residue protein sequence, read N- to C-terminus: Ketol-acid reductoisomerase (NADP(+)) (493 aa).

Residues 17-208 (LSQCRFMDRS…GGDRAGVLHS (192 aa)) form the KARI N-terminal Rossmann domain. Residues 45–48 (CGAQ), arginine 68, arginine 76, serine 78, and 108–110 (DKQ) contribute to the NADP(+) site. Histidine 132 is a catalytic residue. Glycine 158 contributes to the NADP(+) binding site. 2 consecutive KARI C-terminal knotted domains span residues 209 to 344 (SFIA…NAPS) and 345 to 486 (SNEH…MKDM). 4 residues coordinate Mg(2+): aspartate 217, glutamate 221, glutamate 389, and glutamate 393. Serine 414 serves as a coordination point for substrate.

It belongs to the ketol-acid reductoisomerase family. The cofactor is Mg(2+).

The enzyme catalyses (2R)-2,3-dihydroxy-3-methylbutanoate + NADP(+) = (2S)-2-acetolactate + NADPH + H(+). It carries out the reaction (2R,3R)-2,3-dihydroxy-3-methylpentanoate + NADP(+) = (S)-2-ethyl-2-hydroxy-3-oxobutanoate + NADPH + H(+). It participates in amino-acid biosynthesis; L-isoleucine biosynthesis; L-isoleucine from 2-oxobutanoate: step 2/4. The protein operates within amino-acid biosynthesis; L-valine biosynthesis; L-valine from pyruvate: step 2/4. In terms of biological role, involved in the biosynthesis of branched-chain amino acids (BCAA). Catalyzes an alkyl-migration followed by a ketol-acid reduction of (S)-2-acetolactate (S2AL) to yield (R)-2,3-dihydroxy-isovalerate. In the isomerase reaction, S2AL is rearranged via a Mg-dependent methyl migration to produce 3-hydroxy-3-methyl-2-ketobutyrate (HMKB). In the reductase reaction, this 2-ketoacid undergoes a metal-dependent reduction by NADPH to yield (R)-2,3-dihydroxy-isovalerate. The protein is Ketol-acid reductoisomerase (NADP(+)) of Shewanella amazonensis (strain ATCC BAA-1098 / SB2B).